The following is a 399-amino-acid chain: Methylthioribose kinase (399 aa).

ATP-binding positions include N40, K57, and 111-113 (EDL). Residue D229 coordinates substrate. 246–248 (DAE) is an ATP binding site. Position 344 (R344) interacts with substrate.

The protein belongs to the methylthioribose kinase family. Homodimer.

The enzyme catalyses 5-(methylsulfanyl)-D-ribose + ATP = 5-(methylsulfanyl)-alpha-D-ribose 1-phosphate + ADP + H(+). It functions in the pathway amino-acid biosynthesis; L-methionine biosynthesis via salvage pathway; S-methyl-5-thio-alpha-D-ribose 1-phosphate from S-methyl-5'-thioadenosine (hydrolase route): step 2/2. Its function is as follows. Catalyzes the phosphorylation of methylthioribose into methylthioribose-1-phosphate. This Citrobacter koseri (strain ATCC BAA-895 / CDC 4225-83 / SGSC4696) protein is Methylthioribose kinase.